Consider the following 291-residue polypeptide: MSSTEPDALLGPADIRDLAATLGVRPTKQRGQNFVIDANTVRRIVRTAEVRPDDTVVEVGPGLGSLTLALLEAADRVVAVEIDDVLAAALPATVQARMPERADRFALVHSDAMLVTELPGPAPTALVANLPYNVAVPVLLTMLERFPSIERTLVMVQSEVADRLAARPGNKVYGVPSVKANWYADVKRAGAIGRNVFWPAPNVDSGLVSLVRRTEPIATTASRAEVFAVVDAAFAQRRKTLRAALSGWAGSAPAAEAALVAAGISPQARGEALTVEEFAAIAEHKPEVSSL.

S-adenosyl-L-methionine contacts are provided by asparagine 33, valine 35, glycine 60, glutamate 81, aspartate 111, and asparagine 129.

It belongs to the class I-like SAM-binding methyltransferase superfamily. rRNA adenine N(6)-methyltransferase family. RsmA subfamily.

The protein localises to the cytoplasm. The enzyme catalyses adenosine(1518)/adenosine(1519) in 16S rRNA + 4 S-adenosyl-L-methionine = N(6)-dimethyladenosine(1518)/N(6)-dimethyladenosine(1519) in 16S rRNA + 4 S-adenosyl-L-homocysteine + 4 H(+). In terms of biological role, specifically dimethylates two adjacent adenosines (A1518 and A1519) in the loop of a conserved hairpin near the 3'-end of 16S rRNA in the 30S particle. May play a critical role in biogenesis of 30S subunits. This is Ribosomal RNA small subunit methyltransferase A from Streptomyces griseus subsp. griseus (strain JCM 4626 / CBS 651.72 / NBRC 13350 / KCC S-0626 / ISP 5235).